A 617-amino-acid polypeptide reads, in one-letter code: Ceramide transfer protein (617 aa).

Polar residues predominate over residues 1–11 (MSDNQSWNSSG). A disordered region spans residues 1 to 23 (MSDNQSWNSSGSEEDLETESGPP). One can recognise a PH domain in the interval 23–117 (PVERCGVLSK…WIDSIEQHKS (95 aa)). Residues 268–302 (REDSWQKRLDKEIEKRRRVEEAYKNAMTELKKKSH) adopt a coiled-coil conformation. Residues 320 to 326 (EFFDAVE) carry the FFAT motif. Residues 332 to 344 (QDKIEQSQSEKGR) show a composition bias toward basic and acidic residues. Residues 332 to 355 (QDKIEQSQSEKGRSHWPSSLPSTE) form a disordered region. The START domain occupies 383–611 (DEHRFRIQVE…FTSYVQEKTA (229 aa)). Glu-466, Gln-487, Asn-524, and Tyr-572 together coordinate an N-acylsphing-4-enine.

The protein localises to the cytoplasm. Its subcellular location is the golgi apparatus. It localises to the endoplasmic reticulum. It catalyses the reaction N-hexadecanoylsphing-4-enine(in) = N-hexadecanoylsphing-4-enine(out). Its function is as follows. May mediate the intracellular trafficking of ceramide in a non-vesicular manner. This is Ceramide transfer protein (cert1) from Xenopus tropicalis (Western clawed frog).